We begin with the raw amino-acid sequence, 604 residues long: Threonine--tRNA ligase (604 aa).

Residues D197–P499 form a catalytic region. Residues C296, H347, and H476 each contribute to the Zn(2+) site.

Belongs to the class-II aminoacyl-tRNA synthetase family. As to quaternary structure, homodimer. Zn(2+) serves as cofactor.

Its subcellular location is the cytoplasm. The enzyme catalyses tRNA(Thr) + L-threonine + ATP = L-threonyl-tRNA(Thr) + AMP + diphosphate + H(+). In terms of biological role, catalyzes the attachment of threonine to tRNA(Thr) in a two-step reaction: L-threonine is first activated by ATP to form Thr-AMP and then transferred to the acceptor end of tRNA(Thr). Also edits incorrectly charged L-seryl-tRNA(Thr). The sequence is that of Threonine--tRNA ligase from Synechococcus elongatus (strain ATCC 33912 / PCC 7942 / FACHB-805) (Anacystis nidulans R2).